Consider the following 226-residue polypeptide: Orotate phosphoribosyltransferase (226 aa).

5-phospho-alpha-D-ribose 1-diphosphate is bound at residue lysine 30. 38–39 (FF) serves as a coordination point for orotate. 5-phospho-alpha-D-ribose 1-diphosphate is bound by residues 76 to 77 (YK), arginine 106, lysine 107, lysine 110, histidine 112, and 132 to 140 (DDVMTAGTA). Orotate is bound by residues threonine 136 and arginine 164.

The protein belongs to the purine/pyrimidine phosphoribosyltransferase family. PyrE subfamily. Homodimer.

It catalyses the reaction orotidine 5'-phosphate + diphosphate = orotate + 5-phospho-alpha-D-ribose 1-diphosphate. Its pathway is pyrimidine metabolism; UMP biosynthesis via de novo pathway; UMP from orotate: step 1/2. In terms of biological role, catalyzes the transfer of a ribosyl phosphate group from 5-phosphoribose 1-diphosphate to orotate, leading to the formation of orotidine monophosphate (OMP). The protein is Orotate phosphoribosyltransferase (URA5) of Kluyveromyces lactis (strain ATCC 8585 / CBS 2359 / DSM 70799 / NBRC 1267 / NRRL Y-1140 / WM37) (Yeast).